The primary structure comprises 101 residues: Small ribosomal subunit protein uS14 (101 aa).

It belongs to the universal ribosomal protein uS14 family. In terms of assembly, part of the 30S ribosomal subunit. Contacts proteins S3 and S10.

Functionally, binds 16S rRNA, required for the assembly of 30S particles and may also be responsible for determining the conformation of the 16S rRNA at the A site. The chain is Small ribosomal subunit protein uS14 from Shewanella denitrificans (strain OS217 / ATCC BAA-1090 / DSM 15013).